The chain runs to 301 residues: Large ribosomal subunit protein uL18y (301 aa).

Residues 247-267 (RAEPNHKKTEKSAPKEHKRYN) form a disordered region. The segment covering 249 to 261 (EPNHKKTEKSAPK) has biased composition (basic and acidic residues).

Belongs to the universal ribosomal protein uL18 family. Component of the large ribosomal subunit (LSU).

The protein localises to the cytoplasm. The protein resides in the nucleus. It localises to the nucleolus. Its subcellular location is the nucleoplasm. Its function is as follows. Component of the ribosome, a large ribonucleoprotein complex responsible for the synthesis of proteins in the cell. The small ribosomal subunit (SSU) binds messenger RNAs (mRNAs) and translates the encoded message by selecting cognate aminoacyl-transfer RNA (tRNA) molecules. The large subunit (LSU) contains the ribosomal catalytic site termed the peptidyl transferase center (PTC), which catalyzes the formation of peptide bonds, thereby polymerizing the amino acids delivered by tRNAs into a polypeptide chain. The nascent polypeptides leave the ribosome through a tunnel in the LSU and interact with protein factors that function in enzymatic processing, targeting, and the membrane insertion of nascent chains at the exit of the ribosomal tunnel. Seems involved in the regulation of cell proliferation. Essential in leaf polarity establishment, probably having a role for translation in leaf dorsoventral patterning to specify leaf adaxial identity. In Arabidopsis thaliana (Mouse-ear cress), this protein is Large ribosomal subunit protein uL18y.